We begin with the raw amino-acid sequence, 318 residues long: MDARSELHHYNPYRVFSRSEWANLRQDTPMTLDAGEVSTLRSLHDRLDLSEVEEIYLPMSRLLSIHVGAMQQLYYAQRRFLGVVERKMPYIIGVAGSVAVGKSTTARVLQALLARWSPRPKVDLITTDGFLHPNAVLERAGLMQKKGFPESYDLPALLAFLSDIKSGRRKVRAPIYSHLTYDIVPNKFAVVDRPDILIVEGVNVLQTGRLPRDGKAVPVVSDFFDFSVYIDADEPVLRDWYIRRFLALRDTAFHDPRSYFHRYAPLSDEEATATAIAIWERTNLANLEDNILPTRPRATLILKKGADHVVDSVALRRL.

96–103 is a binding site for ATP; that stretch reads GSVAVGKS.

Belongs to the prokaryotic pantothenate kinase family.

It is found in the cytoplasm. It carries out the reaction (R)-pantothenate + ATP = (R)-4'-phosphopantothenate + ADP + H(+). Its pathway is cofactor biosynthesis; coenzyme A biosynthesis; CoA from (R)-pantothenate: step 1/5. The chain is Pantothenate kinase from Rhodopseudomonas palustris (strain HaA2).